A 58-amino-acid polypeptide reads, in one-letter code: PGPCCNDKCVCKEGGCKEGCQCTSCRCSPCEKCSSGCKCANKEECSKTCSKACSCCPT.

The segment at 1-28 (PGPCCNDKCVCKEGGCKEGCQCTSCRCS) is beta. Residues C4, C5, C9, C11, C16, C20, C22, C25, C27, C30, C33, C37, C39, C45, C49, C53, C55, and C56 each coordinate a divalent metal cation. The tract at residues 29-58 (PCEKCSSGCKCANKEECSKTCSKACSCCPT) is alpha.

The protein belongs to the metallothionein superfamily. Type 3 family.

Its function is as follows. Metallothioneins have a high content of cysteine residues that bind various heavy metals. Class I MTS in marine crustacea are involved in the sequestration of elevated levels of heavy-metal ions. The polypeptide is Metallothionein-1 (Scylla serrata (Mud crab)).